Reading from the N-terminus, the 289-residue chain is uncharacterized protein (289 aa).

Positions 1 to 19 (MAKWLGAPLARGVSTATRA) are cleaved as a signal peptide. 2 consecutive transmembrane segments (helical) span residues 90-110 (GLLAAAFVASVLLGVGIGWGV) and 257-277 (AALSLSLYVSSDYGGGYLVFA).

The protein resides in the cell membrane. This is an uncharacterized protein from Mycobacterium tuberculosis (strain CDC 1551 / Oshkosh).